The chain runs to 602 residues: Lysine--tRNA ligase, chloroplastic/mitochondrial (602 aa).

Over residues 50–62 the composition is skewed to low complexity; it reads SSSSSSATTAETS. The tract at residues 50 to 83 is disordered; it reads SSSSSSATTAETSKPSGRNRRSASSSNSTSDREA. The OB DNA-binding region spans 136-214; that stretch reads VSIAGRVVAR…SICVNSFSIL (79 aa). Substrate is bound by residues G285 and E309. ATP-binding positions include 331–333 and 339–340; these read RNE and HN. Positions 347 and 349 each coordinate substrate. Ca(2+) contacts are provided by E492 and E499. 499-500 contributes to the ATP binding site; the sequence is EM. Substrate contacts are provided by N502 and E506. Residues 524–543 show a composition bias toward basic and acidic residues; that stretch reads HNAKRAEAVRESPEPNAKKD. Positions 524-550 are disordered; it reads HNAKRAEAVRESPEPNAKKDDDDDESY. 575–578 lines the ATP pocket; it reads GIDR.

Belongs to the class-II aminoacyl-tRNA synthetase family. It depends on Ca(2+) as a cofactor.

The protein resides in the plastid. It localises to the chloroplast. Its subcellular location is the mitochondrion. It carries out the reaction tRNA(Lys) + L-lysine + ATP = L-lysyl-tRNA(Lys) + AMP + diphosphate. Functionally, catalyzes the specific attachment of an amino acid to its cognate tRNA in a 2 step reaction: the amino acid (AA) is first activated by ATP to form AA-AMP and then transferred to the acceptor end of the tRNA. This is Lysine--tRNA ligase, chloroplastic/mitochondrial from Arabidopsis thaliana (Mouse-ear cress).